A 427-amino-acid polypeptide reads, in one-letter code: Serine--tRNA ligase (427 aa).

231–233 is a binding site for L-serine; sequence TAE. ATP is bound at residue 262-264; sequence RSE. An L-serine-binding site is contributed by E285. Residue 349 to 352 coordinates ATP; it reads EISS. L-serine is bound at residue S385.

The protein belongs to the class-II aminoacyl-tRNA synthetase family. Type-1 seryl-tRNA synthetase subfamily. In terms of assembly, homodimer. The tRNA molecule binds across the dimer.

It is found in the cytoplasm. The enzyme catalyses tRNA(Ser) + L-serine + ATP = L-seryl-tRNA(Ser) + AMP + diphosphate + H(+). It catalyses the reaction tRNA(Sec) + L-serine + ATP = L-seryl-tRNA(Sec) + AMP + diphosphate + H(+). Its pathway is aminoacyl-tRNA biosynthesis; selenocysteinyl-tRNA(Sec) biosynthesis; L-seryl-tRNA(Sec) from L-serine and tRNA(Sec): step 1/1. In terms of biological role, catalyzes the attachment of serine to tRNA(Ser). Is also able to aminoacylate tRNA(Sec) with serine, to form the misacylated tRNA L-seryl-tRNA(Sec), which will be further converted into selenocysteinyl-tRNA(Sec). The polypeptide is Serine--tRNA ligase (Hahella chejuensis (strain KCTC 2396)).